We begin with the raw amino-acid sequence, 146 residues long: 3-dehydroquinate dehydratase (146 aa).

The active-site Proton acceptor is the tyrosine 24. Substrate contacts are provided by asparagine 73, histidine 79, and aspartate 86. The Proton donor role is filled by histidine 99. Residues leucine 100–serine 101 and arginine 110 each bind substrate.

It belongs to the type-II 3-dehydroquinase family. Homododecamer.

The enzyme catalyses 3-dehydroquinate = 3-dehydroshikimate + H2O. The protein operates within metabolic intermediate biosynthesis; chorismate biosynthesis; chorismate from D-erythrose 4-phosphate and phosphoenolpyruvate: step 3/7. In terms of biological role, catalyzes a trans-dehydration via an enolate intermediate. The chain is 3-dehydroquinate dehydratase from Shewanella baltica (strain OS195).